Consider the following 1224-residue polypeptide: Coatomer subunit alpha (1224 aa).

WD repeat units lie at residues 7-37 (TKSA…QLWD), 49-79 (EHDG…KVWN), 91-121 (GHLD…RVWN), and 133-163 (GHNH…RVWD). S173 carries the phosphoserine modification. A Phosphothreonine modification is found at T185. WD repeat units lie at residues 203–233 (GHDR…KIWR) and 247–277 (GHYN…RVWD). T591 carries the phosphothreonine modification. R965 bears the Omega-N-methylarginine mark. The residue at position 1193 (S1193) is a Phosphoserine.

In terms of assembly, oligomeric complex that consists of at least the alpha, beta, beta', gamma, delta, epsilon and zeta subunits. Interacts with SCYL1. Interacts with JAGN1. Interacts with TMEM41B. Interacts with SVEP1. Probably interacts with PEX11A.

Its subcellular location is the cytoplasm. It is found in the golgi apparatus membrane. It localises to the cytoplasmic vesicle. The protein localises to the COPI-coated vesicle membrane. The protein resides in the secreted. Functionally, the coatomer is a cytosolic protein complex that binds to dilysine motifs and reversibly associates with Golgi non-clathrin-coated vesicles, which further mediate biosynthetic protein transport from the ER, via the Golgi up to the trans Golgi network. Coatomer complex is required for budding from Golgi membranes, and is essential for the retrograde Golgi-to-ER transport of dilysine-tagged proteins. In mammals, the coatomer can only be recruited by membranes associated to ADP-ribosylation factors (ARFs), which are small GTP-binding proteins; the complex also influences the Golgi structural integrity, as well as the processing, activity, and endocytic recycling of LDL receptors. Xenin stimulates exocrine pancreatic secretion. It inhibits pentagastrin-stimulated secretion of acid, to induce exocrine pancreatic secretion and to affect small and large intestinal motility. In the gut, xenin interacts with the neurotensin receptor. This Bos taurus (Bovine) protein is Coatomer subunit alpha (COPA).